Here is a 482-residue protein sequence, read N- to C-terminus: Cytochrome P450 monooxygenase pynD (482 aa).

The signal sequence occupies residues 1 to 22 (MWRIPVIVALVAGLLYWVRKQG). The N-linked (GlcNAc...) asparagine glycan is linked to N401. C417 is a heme binding site.

It belongs to the cytochrome P450 family. The cofactor is heme.

It participates in secondary metabolite biosynthesis. Its function is as follows. Cytochrome P450 monooxygenase; part of the gene cluster that mediates the biosynthesis of pyranonigrins, a family of antioxidative compounds. The first step of pyranonigrins biosynthesis is performed by the hybrid PKS-NRPS synthetase that condenses 6 malonyl-CoA units to an acetyl starter unit, to form a 1,3,5-trioxotetradecane-6,8-dienyl-ACP. The enoyl reductase (ER) domain of pynA is likely to be functional during the first two rounds of polyketide chain extension, to generate the saturated C-C bonds of the alkyl side chain. PynA subsequently forms the amide bond between the acyl chain and L-serine. Although pynA has a terminal reductase domain, it appears to require the thioesterase pynI for the release of the straight-chain intermediate from pynA via the formation of a tetramic acid pyranonigrin J. The methyltransferase pynC then coverts pyranonigrin J to pyranonigrin I via N-methylation. The FAD-dependent monooxygenase pynG catalyzes an epoxidation-mediated cyclization to form the dihydro-gamma-pyrone moiety, followed by pynD-catalyzed oxidation of the alcohol to the ketone and enolization to yield the characteristic tetramic acid-fused gamma-pyrone core of pyranonigrin H. Pyranonigrin H is substrate of pynH for dehydration-mediated exo-methylene formation from the serine side chain to produce pyranonigrin E, before the oxidase pynE reduces the exo-methylene of pyranonigrin E into a pendant methyl to form pyranonigrin G. The FAD-linked oxidoreductase pynB performs the reverse reaction and converts pyranonigrin G back to pyranonigrin E. The polypeptide is Cytochrome P450 monooxygenase pynD (Aspergillus niger (strain ATCC MYA-4892 / CBS 513.88 / FGSC A1513)).